Here is a 124-residue protein sequence, read N- to C-terminus: uncharacterized protein (124 aa).

An N-terminal signal peptide occupies residues Met1–Ala18. The N-palmitoyl cysteine moiety is linked to residue Cys19. A lipid anchor (S-diacylglycerol cysteine) is attached at Cys19.

The protein localises to the cell membrane. This is an uncharacterized protein from Pasteurella multocida (strain Pm70).